The chain runs to 561 residues: MSLYINIKDTIYANLAKAALEAQKAGELSFESLPNYVLEEPREKQHGDWATNLAMVLTKQARKAPRDIATILIKHLDTEGTFITASEIAGPGFINFRLDPNWLTGVIPEVLNLEADYGKVNLGQGKKVQVEFVSANPTGLLHMGNARGAALGDSLAALLAMAGYEVSREFYINDAGNQIYNFALSLEARYLQLMGQDVPFPEGGYHGEDLIDTVKGLIEKVGNKYLNVDQDLRREFLVRYALEEKLTSIRETLTDMGVHYDCWFSEQSLHDSGFVKDTMEKLEQQGYIYEKEGAQWLKSTLFGDEKDEVVVRGNGTPTYFAADIAYHRNKFERGFDRVINIWGADHHGHVARMKGAMSALGYDPENLQIILMQLVRLIQNGEVVRMSKRSGQYITLRELMDEVGKDAARFFFIMRDPDSTVEFDLDLAKAESSDNPVYYVQYAHARLCSILRQAAEQGYNTAGIPQEGELKRLQSNEERELLKKIAELPNEIEVAARLTEPHRLARYVLDLAGLFHSFYNSQRVLVDEEGLREARLGLVRSTKQVLANVLGILGVTAPERM.

The 'HIGH' region signature appears at 135 to 145 (ANPTGLLHMGN).

This sequence belongs to the class-I aminoacyl-tRNA synthetase family. Monomer.

It is found in the cytoplasm. It carries out the reaction tRNA(Arg) + L-arginine + ATP = L-arginyl-tRNA(Arg) + AMP + diphosphate. This is Arginine--tRNA ligase from Desulfitobacterium hafniense (strain DSM 10664 / DCB-2).